We begin with the raw amino-acid sequence, 31 residues long: Cyclotide cter-R (31 aa).

A cross-link (cyclopeptide (Gly-Asn)) is located at residues 1–31 (GIPCGESCVFIPCTVTALLGCSCKDKVCYKN). 3 cysteine pairs are disulfide-bonded: Cys-4-Cys-21, Cys-8-Cys-23, and Cys-13-Cys-28.

In terms of processing, this is a cyclic peptide.

The protein resides in the secreted. Its function is as follows. Probably participates in a plant defense mechanism. This chain is Cyclotide cter-R, found in Clitoria ternatea (Butterfly pea).